Here is a 185-residue protein sequence, read N- to C-terminus: Intraflagellar transport protein 22 homolog (185 aa).

GTP contacts are provided by residues 10–17, 63–67, and 123–126; these read GPCESGKT, DCGGD, and HKPG. S137 carries the post-translational modification Phosphoserine.

Belongs to the small GTPase superfamily. Rab family. Component of the IFT complex B, at least composed of IFT20, IFT22, IFT25, IFT27, IFT46, IFT52, TRAF3IP1/IFT54, IFT57, IFT74, IFT80, IFT81, and IFT88. Interacts with IFT88. Interacts with CFAP61.

It localises to the cell projection. It is found in the cilium. Functionally, small GTPase-like component of the intraflagellar transport (IFT) complex B. In Macaca fascicularis (Crab-eating macaque), this protein is Intraflagellar transport protein 22 homolog (IFT22).